The sequence spans 332 residues: T-cell surface glycoprotein CD1c1 (332 aa).

The N-terminal stretch at 1–17 (MLFLHFLFLDVVLGGSI) is a signal peptide. Over 18-300 (TENVVQENIS…IILYWGHGLS (283 aa)) the chain is Extracellular. Residues N25, N38, N75, and N146 are each glycosylated (N-linked (GlcNAc...) asparagine). 2 disulfide bridges follow: C120–C184 and C224–C279. The Ig-like domain occupies 205 to 292 (PEVWLSSSPN…HSSLRDQDII (88 aa)). Residues 301–321 (VILITFAVIVPLVLLIVLMLL) form a helical membrane-spanning segment. Residues 322–332 (YKKRCTYQGIQ) lie on the Cytoplasmic side of the membrane.

Heterodimer with B2M (beta-2-microglobulin).

Its subcellular location is the cell membrane. It is found in the endosome membrane. Antigen-presenting protein that binds self and non-self lipid and glycolipid antigens and presents them to T-cell receptors on natural killer T-cells. The protein is T-cell surface glycoprotein CD1c1 (CD1C1) of Cavia porcellus (Guinea pig).